Consider the following 1216-residue polypeptide: SPOC domain-containing protein 1 (1216 aa).

5 disordered regions span residues 1-74 (MSQA…RAAG), 166-216 (EARD…GAHS), 236-325 (NLLS…PPQS), 348-462 (RTGS…PRLE), and 511-601 (SSPS…QQEK). Positions 36 to 50 (PGLSPDGPGASSGPG) are enriched in low complexity. Positions 177-190 (CDRRSPTLSKEEPP) are enriched in basic and acidic residues. Residues 204 to 213 (RVRKKWRRQG) show a composition bias toward basic residues. Residues 266–278 (SGPGEPGGSGAGC) are compositionally biased toward gly residues. A compositionally biased stretch (low complexity) spans 314 to 325 (SLSSAAQAPPQS). Over residues 436–452 (RGTDRSSDNSHQDRPEE) the composition is skewed to basic and acidic residues. Acidic residues predominate over residues 581-592 (EAEEDSLPEQPE). Positions 608 to 728 (VRGTVVRSMQ…IIEQQQKEPC (121 aa)) constitute a TFIIS central domain. The disordered stretch occupies residues 823–850 (QTPMPAPEMPKTRELSPTEPQDRVPPSG). The segment covering 832–844 (PKTRELSPTEPQD) has biased composition (basic and acidic residues). The SPOC domain occupies 867-970 (WEGVLDMFSI…VEHMGMVLLP (104 aa)). A compositionally biased stretch (basic and acidic residues) spans 1046–1055 (RYYQPDDRRP). Disordered stretches follow at residues 1046–1140 (RYYQ…QHFH) and 1176–1216 (PRPL…PRKA).

Interacts with DNMT3A, DNMT3C and DNMT3L. Interacts with C19orf84. Interacts with SPIN1; promoting recruitment to transposons marked with histone H3 trimethylated at both 'Lys-4' and 'Lys-9' (H3K4me3K9me3).

It localises to the nucleus. Its subcellular location is the chromosome. Functionally, protein adapter that acts as an essential executor of PIWIL4-piRNA pathway directed transposon DNA methylation and silencing in the male embryonic germ cells. Recruited to young transposons, which are specifically marked with histone H3 trimethylated at both 'Lys-4' and 'Lys-9' (H3K4me3K9me3), via its association with SPIN1 chromatin reader, and associates with the de novo DNA methylation machinery and repressive chromatin remodeling complexes. Following this, PIWIL4 engages with nascent transposable element transcript to direct piRNA-directed DNA methylation. Not required for piRNA biosynthesis. This chain is SPOC domain-containing protein 1, found in Homo sapiens (Human).